A 384-amino-acid chain; its full sequence is PqqA peptide cyclase (384 aa).

A Radical SAM core domain is found at 14-226; it reads IPAPVGLLAE…IRIVEAARER (213 aa). [4Fe-4S] cluster-binding residues include Cys-28, Cys-32, and Cys-35.

Belongs to the radical SAM superfamily. PqqE family. Interacts with PqqD. The interaction is necessary for activity of PqqE. It depends on [4Fe-4S] cluster as a cofactor.

It carries out the reaction [PQQ precursor protein] + S-adenosyl-L-methionine = E-Y cross-linked-[PQQ precursor protein] + 5'-deoxyadenosine + L-methionine + H(+). It functions in the pathway cofactor biosynthesis; pyrroloquinoline quinone biosynthesis. In terms of biological role, catalyzes the cross-linking of a glutamate residue and a tyrosine residue in the PqqA protein as part of the biosynthesis of pyrroloquinoline quinone (PQQ). The protein is PqqA peptide cyclase of Methylorubrum populi (strain ATCC BAA-705 / NCIMB 13946 / BJ001) (Methylobacterium populi).